Here is a 117-residue protein sequence, read N- to C-terminus: MCRGFEKEEERRSDNGGCQRLCTESHKAPVSCELCGENATVYCEADAAFLCRKCDRWVHSANFLARRHLRRVICTTCRKLTRRCLVGDNFNVVLPEIRMIARIEEHSSDHKIPFVFL.

The B box-type; atypical zinc-finger motif lies at 27-73 (KAPVSCELCGENATVYCEADAAFLCRKCDRWVHSANFLARRHLRRVI). The Zn(2+) site is built by Cys-32, Cys-35, Cys-54, and His-59. The PFVFL signature appears at 113 to 117 (PFVFL).

In terms of assembly, interacts with CO (via B-box) and with TPL (via PFVFL motif). Highly expressed in shoot apical meristems and in vascular tissues of leaves. Also detected in petioles.

The protein localises to the nucleus. Its function is as follows. Developmental regulator acting by forming heterodimeric complexes, that sequester CO and CO-like (COL) proteins into non-functional complexes. Engages CO and the transcriptional repressor TPL in a tripartite complex. Involved in the CO-mediated long-day flowering-promotion pathway. The chain is B-box domain protein 30 from Arabidopsis thaliana (Mouse-ear cress).